The primary structure comprises 187 residues: Threonylcarbamoyl-AMP synthase (187 aa).

In terms of domain architecture, YrdC-like spans 3 to 187 (QVLPADAAEL…ARSGTVIREG (185 aa)).

Belongs to the SUA5 family. TsaC subfamily.

The protein resides in the cytoplasm. The enzyme catalyses L-threonine + hydrogencarbonate + ATP = L-threonylcarbamoyladenylate + diphosphate + H2O. In terms of biological role, required for the formation of a threonylcarbamoyl group on adenosine at position 37 (t(6)A37) in tRNAs that read codons beginning with adenine. Catalyzes the conversion of L-threonine, HCO(3)(-)/CO(2) and ATP to give threonylcarbamoyl-AMP (TC-AMP) as the acyladenylate intermediate, with the release of diphosphate. The protein is Threonylcarbamoyl-AMP synthase of Shewanella pealeana (strain ATCC 700345 / ANG-SQ1).